An 847-amino-acid chain; its full sequence is Lethal(3)malignant brain tumor-like protein 1 (847 aa).

Basic and acidic residues-rich tracts occupy residues 65 to 82 and 144 to 155; these read FPRE…EKGV and AVKEGHAKKDGD. Disordered regions lie at residues 65-87, 142-163, and 237-296; these read FPRE…SEPI, AEAV…PTSR, and VKKR…SEEK. 3 MBT repeats span residues 300-400, 408-507, and 516-611; these read WSWA…LQPP, FSWT…LTPP, and FIWE…LQPP. Positions 473 to 480 are interaction with monomethylated and dimethylated peptides; the sequence is FDNWDDTY. The CCHHC-type zinc-finger motif lies at 639-682; that stretch reads SKYSFHHRKCPTPGCDGSGHVTGRFTAHYCLSGCPLAEKNQGKL. Zn(2+) contacts are provided by Cys-648, Cys-653, His-666, and Cys-672. An SAM domain is found at 778-842; sequence WTIDEVFSFV…YNAILMFKNA (65 aa).

Homodimer.

The protein resides in the nucleus. In terms of biological role, polycomb group (PcG) protein that specifically recognizes and binds mono- and dimethyllysine residues on target proteins, thereby acting as a 'reader' of a network of post-translational modifications. PcG proteins maintain the transcriptionally repressive state of genes: acts as a chromatin compaction factor by recognizing and binding mono- and dimethylated histone H1b/H1-4 at 'Lys-26' (H1bK26me1 and H1bK26me2) and histone H4 at 'Lys-20' (H4K20me1 and H4K20me2), leading to condense chromatin and repress transcription. This Gallus gallus (Chicken) protein is Lethal(3)malignant brain tumor-like protein 1 (L3MBTL1).